The chain runs to 182 residues: Translation initiation factor IF-3 (182 aa).

This sequence belongs to the IF-3 family. In terms of assembly, monomer.

The protein resides in the cytoplasm. In terms of biological role, IF-3 binds to the 30S ribosomal subunit and shifts the equilibrium between 70S ribosomes and their 50S and 30S subunits in favor of the free subunits, thus enhancing the availability of 30S subunits on which protein synthesis initiation begins. This is Translation initiation factor IF-3 from Endomicrobium trichonymphae.